Here is a 265-residue protein sequence, read N- to C-terminus: Mlc titration factor A (265 aa).

Positions 111, 148, 152, and 211 each coordinate Zn(2+).

Belongs to the MtfA family. In terms of assembly, interacts with Mlc. Requires Zn(2+) as cofactor.

It is found in the cytoplasm. Its function is as follows. Involved in the modulation of the activity of the glucose-phosphotransferase system (glucose-PTS). Interacts with the transcriptional repressor Mlc, preventing its interaction with DNA and leading to the modulation of expression of genes regulated by Mlc, including ptsG, which encodes the PTS system glucose-specific EIICB component. In terms of biological role, shows zinc-dependent metallopeptidase activity. The sequence is that of Mlc titration factor A from Klebsiella pneumoniae (strain 342).